We begin with the raw amino-acid sequence, 142 residues long: FAD synthase (142 aa).

ATP contacts are provided by residues 9 to 10 (VF), 14 to 17 (HLGH), D93, and Y120.

The protein belongs to the archaeal FAD synthase family. As to quaternary structure, homodimer. Requires a divalent metal cation as cofactor.

It carries out the reaction FMN + ATP + H(+) = FAD + diphosphate. The protein operates within cofactor biosynthesis; FAD biosynthesis; FAD from FMN: step 1/1. Catalyzes the transfer of the AMP portion of ATP to flavin mononucleotide (FMN) to produce flavin adenine dinucleotide (FAD) coenzyme. This is FAD synthase (ribL) from Thermoplasma volcanium (strain ATCC 51530 / DSM 4299 / JCM 9571 / NBRC 15438 / GSS1).